The primary structure comprises 2341 residues: Pecanex-like protein 1 (2341 aa).

2 consecutive transmembrane segments (helical) span residues 28–50 (ATFVNALHLYLWLFLLGLPFTLY) and 57–74 (MIIVAVYCPVIAAVFIVL). Residues 98-163 (FTDQRTKAEQ…SNQIGSGSSR (66 aa)) form a disordered region. Residue asparagine 109 is glycosylated (N-linked (GlcNAc...) asparagine). Polar residues predominate over residues 143 to 163 (SSRNSYAGLDPSNQIGSGSSR). Asparagine 215 carries N-linked (GlcNAc...) asparagine glycosylation. Disordered stretches follow at residues 270–294 (HSHSYRKDHRPRGVPRTSSSAVAFP), 311–331 (DPVSELESSKPLSGSKESLVE), and 344–689 (DLKI…TRAR). Residues 272–282 (HSYRKDHRPRG) show a composition bias toward basic residues. 2 stretches are compositionally biased toward polar residues: residues 320–331 (KPLSGSKESLVE) and 347–356 (INTSQPPTKS). N-linked (GlcNAc...) asparagine glycosylation occurs at asparagine 348. The span at 370 to 388 (SLRSLSTRSSGSTESYCSG) shows a compositional bias: low complexity. The N-linked (GlcNAc...) asparagine glycan is linked to asparagine 394. Over residues 394–404 (NSTVSSYKSEQ) the composition is skewed to polar residues. Basic and acidic residues-rich tracts occupy residues 430 to 455 (KKECCAGPEEKNSCASDKRTSSEKIA), 465 to 478 (HEAKDPTPSDEMHN), and 527 to 544 (SKVRKDVGGKQKEGDVRP). A compositionally biased stretch (basic residues) spans 554–569 (ASAHKSGRRRTGKKRA). A compositionally biased stretch (low complexity) spans 605 to 635 (QSDLSRASSVQSAHQFSSDSSSSTTSHSCQS). Asparagine 702 is a glycosylation site (N-linked (GlcNAc...) asparagine). The segment at 756-834 (QVAFPEGEEQ…STAQVKVQSR (79 aa)) is disordered. Over residues 814–832 (LSLQDGQQGQQSTAQVKVQ) the composition is skewed to low complexity. Residues asparagine 852 and asparagine 863 are each glycosylated (N-linked (GlcNAc...) asparagine). Transmembrane regions (helical) follow at residues 1003-1025 (ILENVLAVILAILVAFLGSILLI), 1032-1049 (IWVFQFCLVIASCQYSLL), and 1067-1089 (IAYSRPVYFCICCGLIWLLDYGS). N-linked (GlcNAc...) asparagine glycosylation is present at asparagine 1091. The chain crosses the membrane as a helical span at residues 1110 to 1132 (FISARDLVIVFTLCFPIVFFIGL). Asparagine 1155 is a glycosylation site (N-linked (GlcNAc...) asparagine). 4 consecutive transmembrane segments (helical) span residues 1160 to 1182 (LLAALYSFICSIVAVALLYGLCY), 1194 to 1213 (IPVLFSIFCGLLVAVSYHLS), 1266 to 1288 (LVVCIVIGVLYFAIHVSTVFTVL), and 1295 to 1312 (VLYTLVGFVGFVTHYVLP). N-linked (GlcNAc...) asparagine glycans are attached at residues asparagine 1579, asparagine 1720, asparagine 1982, asparagine 2062, and asparagine 2072. Disordered stretches follow at residues 2062 to 2120 (NATT…SPAR) and 2217 to 2237 (GQSSATDAQPGNTLSPANNSH). Composition is skewed to polar residues over residues 2069-2078 (PHSNVTQGSI), 2096-2114 (YPPTLGTSHSSHSVQSGLV), and 2217-2236 (GQSSATDAQPGNTLSPANNS). N-linked (GlcNAc...) asparagine glycosylation is found at asparagine 2234 and asparagine 2260.

It belongs to the pecanex family.

It localises to the membrane. The protein is Pecanex-like protein 1 of Homo sapiens (Human).